The following is a 215-amino-acid chain: Probable nicotinate-nucleotide adenylyltransferase (215 aa).

The protein belongs to the NadD family.

The enzyme catalyses nicotinate beta-D-ribonucleotide + ATP + H(+) = deamido-NAD(+) + diphosphate. The protein operates within cofactor biosynthesis; NAD(+) biosynthesis; deamido-NAD(+) from nicotinate D-ribonucleotide: step 1/1. In terms of biological role, catalyzes the reversible adenylation of nicotinate mononucleotide (NaMN) to nicotinic acid adenine dinucleotide (NaAD). In Gluconacetobacter diazotrophicus (strain ATCC 49037 / DSM 5601 / CCUG 37298 / CIP 103539 / LMG 7603 / PAl5), this protein is Probable nicotinate-nucleotide adenylyltransferase.